A 282-amino-acid chain; its full sequence is MAVPETRPNHTIYINNLNEKIKKDELKKSLYAIFSQFGQILDILVSRSLKMRGQAFVIFKEVSSATNALRSMQGFPFYDKPMRIQYAKTDSDIIAKMKGTFVERDRKREKRKPKSQETPAAKKAVQGGAAAPVVGTVQGPVPGMPPMTQAPRIMHHMPGQPPYMPPPGMIPPPGLAPGQLPPGAMPPQQLMPGQMPPAQPLSENPPNHILFLTNLPEETNELMLSMLFNQFPGFKEVRLVPGRHDIAFVEFDNEVQAGAARDALQGFKITQNNAMKISFAKK.

An N-acetylalanine modification is found at A2. The RRM 1 domain maps to 10 to 89; that stretch reads HTIYINNLNE…KPMRIQYAKT (80 aa). At K60 the chain carries N6-acetyllysine. Positions 101-141 are disordered; it reads FVERDRKREKRKPKSQETPAAKKAVQGGAAAPVVGTVQGPV. Residues 119-141 show a composition bias toward low complexity; that stretch reads PAAKKAVQGGAAAPVVGTVQGPV. R152 carries the post-translational modification Omega-N-methylarginine. Residues 208 to 282 enclose the RRM 2 domain; that stretch reads HILFLTNLPE…NAMKISFAKK (75 aa).

Belongs to the RRM U1 A/B'' family. As to quaternary structure, U1 snRNP is composed of the 7 core Sm proteins SNRPB, SNRPD1, SNRPD2, SNRPD3, SNRPE, SNRPF and SNRPG that assemble in a heptameric protein ring on the Sm site of the small nuclear RNA to form the core snRNP, and at least three U1 snRNP-specific proteins SNRNP70/U1-70K, SNRPA/U1-A and SNRPC/U1-C. Interacts with SFPQ; component of a snRNP-free complex with SFPQ.

It is found in the nucleus. Functionally, component of the spliceosomal U1 snRNP, which is essential for recognition of the pre-mRNA 5' splice-site and the subsequent assembly of the spliceosome. U1 snRNP is the first snRNP to interact with pre-mRNA. This interaction is required for the subsequent binding of U2 snRNP and the U4/U6/U5 tri-snRNP. SNRPA binds stem loop II of U1 snRNA. In a snRNP-free form (SF-A) may be involved in coupled pre-mRNA splicing and polyadenylation process. May bind preferentially to the 5'-UGCAC-3' motif on RNAs. The polypeptide is U1 small nuclear ribonucleoprotein A (SNRPA) (Bos taurus (Bovine)).